The chain runs to 256 residues: Thiazole synthase (256 aa).

Residue K95 is the Schiff-base intermediate with DXP of the active site. 1-deoxy-D-xylulose 5-phosphate contacts are provided by residues G156, 182–183, and 204–205; these read AG and NT.

It belongs to the ThiG family. As to quaternary structure, homotetramer. Forms heterodimers with either ThiH or ThiS.

It is found in the cytoplasm. The enzyme catalyses [ThiS sulfur-carrier protein]-C-terminal-Gly-aminoethanethioate + 2-iminoacetate + 1-deoxy-D-xylulose 5-phosphate = [ThiS sulfur-carrier protein]-C-terminal Gly-Gly + 2-[(2R,5Z)-2-carboxy-4-methylthiazol-5(2H)-ylidene]ethyl phosphate + 2 H2O + H(+). The protein operates within cofactor biosynthesis; thiamine diphosphate biosynthesis. Functionally, catalyzes the rearrangement of 1-deoxy-D-xylulose 5-phosphate (DXP) to produce the thiazole phosphate moiety of thiamine. Sulfur is provided by the thiocarboxylate moiety of the carrier protein ThiS. In vitro, sulfur can be provided by H(2)S. The chain is Thiazole synthase from Shigella dysenteriae serotype 1 (strain Sd197).